The following is a 216-amino-acid chain: Large ribosomal subunit protein uL3 (216 aa).

Residues Gly-136–Lys-155 are disordered. Residue Gln-151 is modified to N5-methylglutamine.

This sequence belongs to the universal ribosomal protein uL3 family. In terms of assembly, part of the 50S ribosomal subunit. Forms a cluster with proteins L14 and L19. Post-translationally, methylated by PrmB.

One of the primary rRNA binding proteins, it binds directly near the 3'-end of the 23S rRNA, where it nucleates assembly of the 50S subunit. This chain is Large ribosomal subunit protein uL3, found in Rickettsia prowazekii (strain Madrid E).